Reading from the N-terminus, the 252-residue chain is TLC domain-containing protein 1 (252 aa).

Residues 1–29 form the signal peptide; it reads MGPGWRAPSAALVGGSVALFGALRRAALA. Residues 30–47 are Extracellular-facing; it reads LPRPAAVRSRPGRVWRWR. The region spanning 41 to 235 is the TLC domain; sequence GRVWRWRNLL…LLRSDFFPSL (195 aa). A helical transmembrane segment spans residues 48–68; the sequence is NLLVSFAHSVLAGLWALFSLW. Residues 69-84 are Cytoplasmic-facing; the sequence is QSPELLSDIQDGYSVS. Residues 85 to 105 traverse the membrane as a helical segment; the sequence is GHLLVCFSSGYFIHDSLDIIF. The Extracellular portion of the chain corresponds to 106–124; sequence NQQSRSSWEYLVHHAMAIS. An intramembrane region (helical) is located at residues 125-145; the sequence is AFVSLIITGRFLVAAMLLLLV. Residues 146 to 174 are Extracellular-facing; that stretch reads EVSNIFLTIRMLLKMSNVPSPALYEANKY. Residues 175–195 form a helical membrane-spanning segment; the sequence is VNLVMYFAFRLAPQVYLTWYF. Residues 196 to 202 lie on the Cytoplasmic side of the membrane; that stretch reads VRYVEVQ. Residues 203 to 223 form a helical membrane-spanning segment; it reads GQGAFLMANLLLLDAMILMYF. Topologically, residues 224 to 252 are extracellular; that stretch reads SRLLRSDFFPSLRKGSVGRDVDGEKFLID.

Interacts with CACNA1C in vitro; however the relevance of the interaction in vivo is unclear.

The protein localises to the cell membrane. Its function is as follows. Regulates the composition and fluidity of the plasma membrane. Inhibits the incorporation of membrane-fluidizing phospholipids containing omega-3 long-chain polyunsaturated fatty acids (LCPUFA) and thereby promotes membrane rigidity. Does not appear to have any effect on LCPUFA synthesis. This chain is TLC domain-containing protein 1 (TLCD1), found in Gallus gallus (Chicken).